The following is a 275-amino-acid chain: Polyamine aminopropyltransferase (275 aa).

Positions 2–235 constitute a PABS domain; the sequence is DLWLREGQIE…GFWSFTIGSK (234 aa). Position 31 (Q31) interacts with S-methyl-5'-thioadenosine. The spermidine site is built by H62 and D86. S-methyl-5'-thioadenosine is bound by residues E106 and 137 to 138; that span reads DG. D155 functions as the Proton acceptor in the catalytic mechanism. Spermidine is bound at residue 155 to 158; the sequence is DSTD.

The protein belongs to the spermidine/spermine synthase family. As to quaternary structure, homodimer or homotetramer.

The protein resides in the cytoplasm. It carries out the reaction S-adenosyl 3-(methylsulfanyl)propylamine + putrescine = S-methyl-5'-thioadenosine + spermidine + H(+). It participates in amine and polyamine biosynthesis; spermidine biosynthesis; spermidine from putrescine: step 1/1. Catalyzes the irreversible transfer of a propylamine group from the amino donor S-adenosylmethioninamine (decarboxy-AdoMet) to putrescine (1,4-diaminobutane) to yield spermidine. This Clostridium kluyveri (strain NBRC 12016) protein is Polyamine aminopropyltransferase.